The sequence spans 453 residues: Glutamyl-tRNA(Gln) amidotransferase subunit A (453 aa).

Residues Lys53 and Ser128 each act as charge relay system in the active site. The Acyl-ester intermediate role is filled by Ser152.

This sequence belongs to the amidase family. GatA subfamily. As to quaternary structure, heterotrimer of A, B and C subunits.

It catalyses the reaction L-glutamyl-tRNA(Gln) + L-glutamine + ATP + H2O = L-glutaminyl-tRNA(Gln) + L-glutamate + ADP + phosphate + H(+). Functionally, allows the formation of correctly charged Gln-tRNA(Gln) through the transamidation of misacylated Glu-tRNA(Gln) in organisms which lack glutaminyl-tRNA synthetase. The reaction takes place in the presence of glutamine and ATP through an activated gamma-phospho-Glu-tRNA(Gln). This chain is Glutamyl-tRNA(Gln) amidotransferase subunit A, found in Helicobacter pylori (strain G27).